The primary structure comprises 157 residues: MFDVLMYLFETYIHSDADVMVEQNELTDELSRAGFDKDEIEKALNWLERLANLHDSEREVYVAASAQGSMRIYAPQELARLSTECRGFLLFLEQAQVLNAETREICIERLLELDKPDIELDDLKWVVMMVLFNVPGSENAYQQMEELVFDESDGVIH.

This sequence belongs to the Smg family.

This chain is Protein Smg homolog, found in Aeromonas hydrophila subsp. hydrophila (strain ATCC 7966 / DSM 30187 / BCRC 13018 / CCUG 14551 / JCM 1027 / KCTC 2358 / NCIMB 9240 / NCTC 8049).